The sequence spans 61 residues: Large ribosomal subunit protein uL30 (61 aa).

The protein belongs to the universal ribosomal protein uL30 family. Part of the 50S ribosomal subunit.

This Rubrobacter xylanophilus (strain DSM 9941 / JCM 11954 / NBRC 16129 / PRD-1) protein is Large ribosomal subunit protein uL30.